We begin with the raw amino-acid sequence, 498 residues long: Diacylglycerol O-acyltransferase 1A (498 aa).

Residues 1 to 67 (MAISDEPETV…ANSQPQQKQD (67 aa)) are disordered. 7 helical membrane-spanning segments follow: residues 102-122 (HAGLFNLCIVVLVAVNSRLII), 146-166 (WPLFMCCLSLVVFPFAAFIVE), 178-198 (VVVVLHIIITSASLFYPVLVI), 203-223 (SAFLSGVTLMLFACVVWLKLV), 253-273 (YPYNVSFKSLAYFLVAPTLCY), 295-315 (LIIFTGVMGFIIEQYINPIVQ), and 342-362 (VWLCMFYCFFHLWLNILAELL). Positions 369 to 375 (FYQDWWN) match the FYXDWWN motif motif. Helical transmembrane passes span 410 to 430 (AVALLIAFLVSALFHELCIAV), 432 to 452 (CHIFKLWAFGGIMFQVPLVFI), and 465 to 485 (VGNMIFWFIFSILGQPMCVLL). His-424 is a catalytic residue.

It belongs to the membrane-bound acyltransferase family. Sterol o-acyltransferase subfamily. In terms of tissue distribution, highly expressed in flowers and pods. Expressed at low levels in roots, stems and leaves.

It localises to the endoplasmic reticulum membrane. The catalysed reaction is an acyl-CoA + a 1,2-diacyl-sn-glycerol = a triacyl-sn-glycerol + CoA. The protein operates within glycerolipid metabolism; triacylglycerol biosynthesis. Functionally, major contributor to triacylglycerol (TAG) synthesis and oil accumulation in developing seeds. Catalyzes the acylation of the sn-3 hydroxy group of sn-1,2-diacylglycerol using acyl-CoA. Has a marked preference for oleoyl-CoA (18:1) and sn-1,2-dioleoylglycerol over vernoloyl-CoA and sn-1,2-divernoloylglycerol. Can use oleoyl-CoA, linoleoyl-CoA and linolenoyl-CoA as substrates. This is Diacylglycerol O-acyltransferase 1A from Glycine max (Soybean).